The following is a 204-amino-acid chain: Urease accessory protein UreG (204 aa).

12 to 19 (GPVGSGKT) provides a ligand contact to GTP.

It belongs to the SIMIBI class G3E GTPase family. UreG subfamily. As to quaternary structure, homodimer. UreD, UreF and UreG form a complex that acts as a GTP-hydrolysis-dependent molecular chaperone, activating the urease apoprotein by helping to assemble the nickel containing metallocenter of UreC. The UreE protein probably delivers the nickel.

It localises to the cytoplasm. Its function is as follows. Facilitates the functional incorporation of the urease nickel metallocenter. This process requires GTP hydrolysis, probably effectuated by UreG. The polypeptide is Urease accessory protein UreG (Streptococcus salivarius (strain 57.I)).